Consider the following 398-residue polypeptide: Organelle RRM domain-containing protein 1, chloroplastic (398 aa).

The transit peptide at 1-88 (MDTALPSVLI…RWVVVMDTPP (88 aa)) directs the protein to the chloroplast. Over residues 54–70 (LLASSSESPPAQLAAAS) the composition is skewed to low complexity. The disordered stretch occupies residues 54 to 79 (LLASSSESPPAQLAAASTESQSRSSR). In terms of domain architecture, RRM spans 299 to 377 (KRLFVTGLSF…WMIVVDVAKT (79 aa)).

It is found in the plastid. The protein localises to the chloroplast. In terms of biological role, involved in C-to-U editing of chloroplastic RNA. Functions as major chloroplastic editing factor. Controls a majority of the chloroplastic editing sites. In Zea mays (Maize), this protein is Organelle RRM domain-containing protein 1, chloroplastic (ORRM1).